We begin with the raw amino-acid sequence, 337 residues long: MDLDQIVADAQQSFEQAADITTLENEKARFLGKSGALTELLKGLGKLDPEARKTEGARINVAKQQVEAALTARRQALADALLNQRLTAEAIDVTLPGRGAGAGSLHPVMRTWERVEQIFGSIGFDVADGPEIETDWYNFTSLNSPENHPARSMQDTFYVEGKDADGRQLLLRTHTSPMQVRYARMNRPPIKVIAPGRTYRVDSDATHSPMFNQVEGLWIDENISFADLKGVYTDFLKKFFERDDILVRFRPSYFPFTEPSAEIDMMFEQGKNAGKWLEISGSGQVHPTVIRNMGLDPERYIGFAFGSGLERLTMLRYGVQDLRLFFENDLRFLRQFA.

Glu-258 is a binding site for Mg(2+).

It belongs to the class-II aminoacyl-tRNA synthetase family. Phe-tRNA synthetase alpha subunit type 1 subfamily. Tetramer of two alpha and two beta subunits. The cofactor is Mg(2+).

The protein localises to the cytoplasm. It carries out the reaction tRNA(Phe) + L-phenylalanine + ATP = L-phenylalanyl-tRNA(Phe) + AMP + diphosphate + H(+). The polypeptide is Phenylalanine--tRNA ligase alpha subunit (Burkholderia cenocepacia (strain ATCC BAA-245 / DSM 16553 / LMG 16656 / NCTC 13227 / J2315 / CF5610) (Burkholderia cepacia (strain J2315))).